Consider the following 307-residue polypeptide: Small ribosomal subunit protein bS1 (307 aa).

S1 motif domains are found at residues 32-101 (GDTV…LSIR), 119-183 (DATV…LSHR), and 197-265 (GEVV…LSTK).

It belongs to the bacterial ribosomal protein bS1 family.

In terms of biological role, binds mRNA. This is Small ribosomal subunit protein bS1 (rpsA) from Synechococcus sp. (strain ATCC 27144 / PCC 6301 / SAUG 1402/1) (Anacystis nidulans).